Consider the following 92-residue polypeptide: Small ribosomal subunit protein uS19c (92 aa).

This sequence belongs to the universal ribosomal protein uS19 family.

It localises to the plastid. Its subcellular location is the chloroplast. Functionally, protein S19 forms a complex with S13 that binds strongly to the 16S ribosomal RNA. This is Small ribosomal subunit protein uS19c from Nymphaea alba (White water-lily).